The chain runs to 520 residues: Beta-galactoside-specific lectin 4 (520 aa).

Asn107 carries N-linked (GlcNAc...) asparagine glycosylation. Glu159 is a catalytic residue. Cys240 and Cys266 are joined by a disulfide. A propeptide spans 241–265 (connecting peptide); sequence GERPSSSDVRYWPLVIRPVIADDVT. The 128-residue stretch at 269–396 folds into the Ricin B-type lectin 1 domain; the sequence is SEPTVRIVGR…YTLGQGWLAG (128 aa). 284–286 contacts D-galactose; sequence DVR. The N-linked (GlcNAc...) asparagine glycan is linked to Asn322. A disulfide bridge connects residues Cys325 and Cys342. Residues Asn357 and Asn397 are each glycosylated (N-linked (GlcNAc...) asparagine). The Ricin B-type lectin 2 domain occupies 400–520; it reads APREVTIYGF…KPNQMWLPVP (121 aa). 2 cysteine pairs are disulfide-bonded: Cys413/Cys426 and Cys451/Cys467. Residue 494–496 participates in D-galactose binding; sequence DVA.

This sequence belongs to the ribosome-inactivating protein family. Type 2 RIP subfamily. Disulfide-linked dimer of A and B chains.

It catalyses the reaction Endohydrolysis of the N-glycosidic bond at one specific adenosine on the 28S rRNA.. Functionally, the A chain is responsible for inhibiting protein synthesis through the catalytic inactivation of 60S ribosomal subunits by removing adenine from position 4,324 of 28S rRNA. The B chain binds to cell receptors and probably facilitates the entry into the cell of the A chain; B chains are also responsible for cell agglutination (lectin activity). Inhibits growth of the human tumor cell line Molt4. This Viscum album (European mistletoe) protein is Beta-galactoside-specific lectin 4.